Consider the following 406-residue polypeptide: Putative ankyrin repeat protein RF_0266 (406 aa).

ANK repeat units follow at residues 68–98, 103–129, 130–161, 163–189, and 203–232; these read TSHS…DINN, NYIT…QDDI, KVQN…IIKP, HIEL…DIEK, and SIDC…KPEQ.

This Rickettsia felis (strain ATCC VR-1525 / URRWXCal2) (Rickettsia azadi) protein is Putative ankyrin repeat protein RF_0266.